The chain runs to 443 residues: Crh-like protein 2 (443 aa).

An N-terminal signal peptide occupies residues 1 to 20 (MVRIGSSLLLATLAATTVSA). In terms of domain architecture, GH16 spans 21–306 (ASDPPKCSQD…TVECYDPPSG (286 aa)). A disulfide bridge links Cys56 with Cys67. The Nucleophile role is filled by Glu164. The active-site Proton donor is the Glu168. Glu168 provides a ligand contact to chitin. N-linked (GlcNAc...) asparagine glycans are attached at residues Asn194 and Asn237. 2 residues coordinate chitin: Trp257 and Thr268. N-linked (GlcNAc...) asparagine glycosylation is found at Asn332 and Asn359. 2 stretches are compositionally biased toward low complexity: residues 350-367 (ASSSASGSANKTSSSANT) and 378-410 (EPGNSHSGSSGSGTSTSDGSGSSTGFSQGSETS). The interval 350 to 420 (ASSSASGSAN…ASSNKNAAPS (71 aa)) is disordered. Residues 411–420 (ASSNKNAAPS) are compositionally biased toward polar residues. Asn416 carries GPI-like-anchor amidated asparagine lipidation. A propeptide spans 417-443 (AAPSQNERVLNGSFFAVLVAVVALVTL) (removed in mature form). Asn427 is a glycosylation site (N-linked (GlcNAc...) asparagine).

This sequence belongs to the glycosyl hydrolase 16 family. CRH1 subfamily. Post-translationally, the GPI-like anchor contains a phosphoceramide lipid group. The anchor position has not been determined.

Its subcellular location is the cell membrane. The protein resides in the secreted. The protein localises to the cell wall. It carries out the reaction Random endo-hydrolysis of N-acetyl-beta-D-glucosaminide (1-&gt;4)-beta-linkages in chitin and chitodextrins.. Functionally, dual chitinase/transglycosylase that plays a role in cell wall architecture. Chitinase and transglycosylase activities are coupled. Required for the polysaccharide cross-linking at the septa and the cell wall. More specifically, transfers chitin to 1,6-beta-glucan in the cell wall. In Aspergillus fumigatus (strain ATCC MYA-4609 / CBS 101355 / FGSC A1100 / Af293) (Neosartorya fumigata), this protein is Crh-like protein 2.